A 646-amino-acid polypeptide reads, in one-letter code: Chaperone protein DnaK (646 aa).

Residue T197 is modified to Phosphothreonine; by autocatalysis. The interval 599–646 is disordered; sequence QQGAQAGADPNAGSSQGAQAGTDYGTSGPKTGTADDVDYEVVNDDNDK. Over residues 610-628 the composition is skewed to polar residues; that stretch reads AGSSQGAQAGTDYGTSGPK. A compositionally biased stretch (acidic residues) spans 633–646; sequence DDVDYEVVNDDNDK.

It belongs to the heat shock protein 70 family.

Acts as a chaperone. The chain is Chaperone protein DnaK from Treponema denticola (strain ATCC 35405 / DSM 14222 / CIP 103919 / JCM 8153 / KCTC 15104).